A 65-amino-acid chain; its full sequence is uncharacterized protein (65 aa).

The next 2 membrane-spanning stretches (helical) occupy residues 4 to 24 (TIWL…MLYP) and 45 to 65 (FGGG…KTIG).

The protein localises to the cell membrane. This is an uncharacterized protein from Escherichia coli O157:H7.